Consider the following 141-residue polypeptide: Ribonuclease VapC38 (141 aa).

The Mg(2+) site is built by D5 and D102.

Belongs to the PINc/VapC protein family. Mg(2+) serves as cofactor.

It is found in the secreted. Functionally, toxic component of a type II toxin-antitoxin (TA) system. An RNase. Its cognate antitoxin is VapB38. This is Ribonuclease VapC38 from Mycobacterium tuberculosis (strain ATCC 25618 / H37Rv).